The chain runs to 218 residues: Small ribosomal subunit protein uS3 (218 aa).

Residues 38–106 (LRNDLKKKLM…PVHLNIEEVK (69 aa)) enclose the KH type-2 domain.

It belongs to the universal ribosomal protein uS3 family. Part of the 30S ribosomal subunit. Forms a tight complex with proteins S10 and S14.

In terms of biological role, binds the lower part of the 30S subunit head. Binds mRNA in the 70S ribosome, positioning it for translation. The chain is Small ribosomal subunit protein uS3 from Legionella pneumophila (strain Paris).